We begin with the raw amino-acid sequence, 255 residues long: tRNA (guanine-N(1)-)-methyltransferase (255 aa).

S-adenosyl-L-methionine-binding positions include G113 and 133–138 (IGDYVL).

This sequence belongs to the RNA methyltransferase TrmD family. Homodimer.

It localises to the cytoplasm. The catalysed reaction is guanosine(37) in tRNA + S-adenosyl-L-methionine = N(1)-methylguanosine(37) in tRNA + S-adenosyl-L-homocysteine + H(+). In terms of biological role, specifically methylates guanosine-37 in various tRNAs. This Salmonella agona (strain SL483) protein is tRNA (guanine-N(1)-)-methyltransferase.